The chain runs to 1517 residues: DNA-directed RNA polymerase subunit beta' (1517 aa).

Zn(2+) contacts are provided by C71, C73, C86, and C89. 3 residues coordinate Mg(2+): D482, D484, and D486. Residues C812, C886, C893, and C896 each coordinate Zn(2+).

This sequence belongs to the RNA polymerase beta' chain family. The RNAP catalytic core consists of 2 alpha, 1 beta, 1 beta' and 1 omega subunit. When a sigma factor is associated with the core the holoenzyme is formed, which can initiate transcription. It depends on Mg(2+) as a cofactor. The cofactor is Zn(2+).

The enzyme catalyses RNA(n) + a ribonucleoside 5'-triphosphate = RNA(n+1) + diphosphate. In terms of biological role, DNA-dependent RNA polymerase catalyzes the transcription of DNA into RNA using the four ribonucleoside triphosphates as substrates. In Campylobacter lari (strain RM2100 / D67 / ATCC BAA-1060), this protein is DNA-directed RNA polymerase subunit beta'.